The chain runs to 220 residues: MOB kinase activator-like 3 (220 aa).

Positions 83, 88, 165, and 170 each coordinate Zn(2+).

This sequence belongs to the MOB1/phocein family.

This Drosophila melanogaster (Fruit fly) protein is MOB kinase activator-like 3 (Mob3).